Reading from the N-terminus, the 528-residue chain is 3-ketoacyl-CoA synthase 2 (528 aa).

2 consecutive transmembrane segments (helical) span residues 36–56 (LGYH…VGLL) and 78–98 (FHFL…TLYF). The FAE domain maps to 97-388 (YFTTRPRRIF…FFATLVARKV (292 aa)). Active-site residues include Cys-241, His-320, His-407, His-411, and Asn-444.

This sequence belongs to the thiolase-like superfamily. Chalcone/stilbene synthases family. In terms of tissue distribution, expressed in siliques, flowers and stems. In young seedlings, expressed in the central cylinder of primary roots, in emerging lateral roots and in their root cap, but not in aboveground tissues such as hypocotyls, cotyledons and leaves. Expressed in sepals in mature flowers and in the chalaza and micropyle region of developing seeds shortly prior to or just after the detachment from the funiculus. Expressed in roots, flowers, cauline leaves and siliques.

It is found in the membrane. It carries out the reaction a very-long-chain acyl-CoA + malonyl-CoA + H(+) = a very-long-chain 3-oxoacyl-CoA + CO2 + CoA. It functions in the pathway lipid metabolism; fatty acid biosynthesis. Inhibited by K3 herbicides such as allidochlor, anilofos, cafenstrole and flufenacet. Strongly inhibited by metazachlor. Its function is as follows. Mediates the synthesis of VLCFAs from 22 to 26 carbons in length (e.g. C22, C24, C26). Involved in the elongation of C20 fatty acid suberin precursors. Functionally redundant with KCS20 in the two-carbon elongation of C22 fatty acids that is required for cuticular wax and root suberin biosynthesis. This Arabidopsis thaliana (Mouse-ear cress) protein is 3-ketoacyl-CoA synthase 2.